We begin with the raw amino-acid sequence, 227 residues long: CDP-diacylglycerol--glycerol-3-phosphate 3-phosphatidyltransferase (227 aa).

5 consecutive transmembrane segments (helical) span residues 30–50 (IFIA…GSVA), 58–78 (VTIH…TAVI), 112–132 (VLIA…VIVL), 159–179 (WKTT…SFSL), and 192–212 (WAIV…SFGI).

This sequence belongs to the CDP-alcohol phosphatidyltransferase class-I family.

The protein resides in the cell membrane. It carries out the reaction a CDP-1,2-diacyl-sn-glycerol + sn-glycerol 3-phosphate = a 1,2-diacyl-sn-glycero-3-phospho-(1'-sn-glycero-3'-phosphate) + CMP + H(+). It participates in phospholipid metabolism; phosphatidylglycerol biosynthesis; phosphatidylglycerol from CDP-diacylglycerol: step 1/2. In terms of biological role, this protein catalyzes the committed step to the synthesis of the acidic phospholipids. This is CDP-diacylglycerol--glycerol-3-phosphate 3-phosphatidyltransferase (pgsA) from Mycoplasma pneumoniae (strain ATCC 29342 / M129 / Subtype 1) (Mycoplasmoides pneumoniae).